Consider the following 191-residue polypeptide: Guanylate kinase (191 aa).

Residues 6–184 (GLIIILSSPS…TIQQIHTIIL (179 aa)) enclose the Guanylate kinase-like domain. 13–20 (SPSGAGKS) contacts ATP.

It belongs to the guanylate kinase family.

The protein localises to the cytoplasm. It carries out the reaction GMP + ATP = GDP + ADP. Its function is as follows. Essential for recycling GMP and indirectly, cGMP. The polypeptide is Guanylate kinase (Rickettsia bellii (strain RML369-C)).